The sequence spans 339 residues: DNA-directed RNA polymerase subunit alpha (339 aa).

The segment at M1–E233 is alpha N-terminal domain (alpha-NTD). Positions K264–F339 are alpha C-terminal domain (alpha-CTD).

The protein belongs to the RNA polymerase alpha chain family. As to quaternary structure, in plastids the minimal PEP RNA polymerase catalytic core is composed of four subunits: alpha, beta, beta', and beta''. When a (nuclear-encoded) sigma factor is associated with the core the holoenzyme is formed, which can initiate transcription.

It is found in the plastid. The protein resides in the chloroplast. It catalyses the reaction RNA(n) + a ribonucleoside 5'-triphosphate = RNA(n+1) + diphosphate. Its function is as follows. DNA-dependent RNA polymerase catalyzes the transcription of DNA into RNA using the four ribonucleoside triphosphates as substrates. The sequence is that of DNA-directed RNA polymerase subunit alpha from Festucopsis serpentini.